Consider the following 445-residue polypeptide: MKHYEANFDGLVGPTHNYAGLSYGNVASLNNAAAISSPKAAAKQGLKKAKALADLGLAQGMLAPQERPDLHTLRRIGFSGTDAEVLNKAAKQAPALLRACCSASSMWTANAATVSPSADTHDGKIHFTPANLVDKLHRSIEPVTTGNILAATFNNSRYFHHHQHLPEHVSFGDEGAANHTRLCSEYGHAGIELFVYGQEATNPNAPKPKKYPARQTLEASQAIARLHQLDDESSVFIQQNPDVIDQGVFHNDVIAVGNQNVLFYHEQAFVDTQKKLAEIQDKFNGKELHFIEVPTAKVGIQDAVKSYLFNTQIVTLPNGEMAIIAPTNCQENEAVYAYLNELVTLGTPIKQVHYFDVKQSMQNGGGPACLRLRVAMNETELAAVNPNTLMNDELFNRLNLWVEKHYRDELAIDDLADPQLIVESRTALDELTQIMKLGSVYQFQK.

Residues 19–28, N110, and 137–138 contribute to the substrate site; these read AGLSYGNVAS and HR. The active site involves E174. R214 is a substrate binding site. H250 is an active-site residue. Residues D252 and N363 each coordinate substrate. The active-site Nucleophile is C369.

This sequence belongs to the succinylarginine dihydrolase family. In terms of assembly, homodimer.

It carries out the reaction N(2)-succinyl-L-arginine + 2 H2O + 2 H(+) = N(2)-succinyl-L-ornithine + 2 NH4(+) + CO2. It participates in amino-acid degradation; L-arginine degradation via AST pathway; L-glutamate and succinate from L-arginine: step 2/5. Catalyzes the hydrolysis of N(2)-succinylarginine into N(2)-succinylornithine, ammonia and CO(2). The chain is N-succinylarginine dihydrolase from Shewanella loihica (strain ATCC BAA-1088 / PV-4).